The following is a 475-amino-acid chain: Ankyrin repeat, SAM and basic leucine zipper domain-containing protein 1 (475 aa).

Serine 17, serine 18, and serine 20 each carry phosphoserine. 6 ANK repeats span residues glutamate 45–serine 74, tyrosine 78–phenylalanine 107, aspartate 110–valine 144, arginine 148–serine 177, asparagine 181–leucine 210, and aspartate 214–glycine 243. In terms of domain architecture, SAM spans serine 272–glutamate 334.

In terms of assembly, interacts with DDX4, PIWIL1, RANBP9 and TDRD1.

It localises to the cytoplasm. Plays a central role during spermatogenesis by repressing transposable elements and preventing their mobilization, which is essential for the germline integrity. Acts via the piRNA metabolic process, which mediates the repression of transposable elements during meiosis by forming complexes composed of piRNAs and Piwi proteins and governs the methylation and subsequent repression of transposons. Its association with pi-bodies suggests a participation in the primary piRNAs metabolic process. Required prior to the pachytene stage to facilitate the production of multiple types of piRNAs, including those associated with repeats involved in the regulation of retrotransposons. May act by mediating protein-protein interactions during germ cell maturation. This Mustela putorius furo (European domestic ferret) protein is Ankyrin repeat, SAM and basic leucine zipper domain-containing protein 1 (ASZ1).